A 124-amino-acid polypeptide reads, in one-letter code: DHMTTPPGANDWDITDGSWSLASEPSQQDLFSASAPYNFGHFNDSEITKDLNDIDSAKSENPTYRKAAFVKYQEDMNKKAYVVPTNFSLSYTPVNKRVVGMTLDYGAMDTWSEIGVSSAKLATK.

Belongs to the bacterial solute-binding protein 5 family. The complex is composed of two ATP-binding proteins (OppD and OppF), two transmembrane proteins (OppB and OppC) and a solute-binding protein (OppA).

The protein resides in the cell membrane. Functionally, part of the ABC transporter complex OppABCDF involved in the uptake of oligopeptides. In Lactococcus lactis subsp. cremoris (Streptococcus cremoris), this protein is Oligopeptide-binding protein OppA (oppA).